We begin with the raw amino-acid sequence, 582 residues long: Trans-activating transcriptional regulatory protein (582 aa).

Positions 101–131 (QPVVEQPSPSSAYHAESFEHSAGVNQPSATG) are disordered.

This sequence belongs to the nucleopolyhedrovirus IE-1 protein family. As to quaternary structure, homodimer. Interacts with helicase and LEF-3. Post-translationally, phosphorylated.

Its subcellular location is the host nucleus. Regulatory transcriptional protein, which trans-activates gene expression from early baculovirus promoters. Can also trans-activate its own promoter, suggesting an autoregulation during infection of host cells. Also promotes viral DNA genome replication via the N-terminal region. This is Trans-activating transcriptional regulatory protein (IE1) from Autographa californica nuclear polyhedrosis virus (AcMNPV).